The primary structure comprises 284 residues: Ribosomal RNA small subunit methyltransferase A (284 aa).

Residues Asn26, Leu28, Gly53, Glu74, Asp97, and Asn127 each contribute to the S-adenosyl-L-methionine site.

Belongs to the class I-like SAM-binding methyltransferase superfamily. rRNA adenine N(6)-methyltransferase family. RsmA subfamily.

The protein resides in the cytoplasm. It carries out the reaction adenosine(1518)/adenosine(1519) in 16S rRNA + 4 S-adenosyl-L-methionine = N(6)-dimethyladenosine(1518)/N(6)-dimethyladenosine(1519) in 16S rRNA + 4 S-adenosyl-L-homocysteine + 4 H(+). Its function is as follows. Specifically dimethylates two adjacent adenosines (A1518 and A1519) in the loop of a conserved hairpin near the 3'-end of 16S rRNA in the 30S particle. May play a critical role in biogenesis of 30S subunits. In Anaeromyxobacter dehalogenans (strain 2CP-C), this protein is Ribosomal RNA small subunit methyltransferase A.